The sequence spans 186 residues: UPF0301 protein HI_0304 (186 aa).

Belongs to the UPF0301 (AlgH) family.

The sequence is that of UPF0301 protein HI_0304 from Haemophilus influenzae (strain ATCC 51907 / DSM 11121 / KW20 / Rd).